Reading from the N-terminus, the 1135-residue chain is Retinoblastoma-like protein 2 (1135 aa).

The segment at 1-43 is disordered; the sequence is MASGGNQSSPPPPAAAASSEEEEEDGDTADRAQPAGSPSHQIQ. Serine 410 bears the Phosphoserine mark. Position 414 is a phosphothreonine (threonine 414). A domain A region spans residues 414-613; it reads TPVSTATHSL…DRIRDNENRV (200 aa). A pocket; binds E1A region spans residues 414–1021; sequence TPVSTATHSL…QTFAMKYSQA (608 aa). Serine 417 is a glycosylation site (O-linked (GlcNAc) serine). The tract at residues 614–824 is spacer; that stretch reads PTCEEVTPPH…QGQPLTSSSI (211 aa). Phosphoserine is present on serine 636. Threonine 639 is subject to Phosphothreonine. 3 disordered regions span residues 649 to 698, 806 to 825, and 932 to 995; these read DAGG…PPQP, ISPGGQQQNQGQPLTSSSIR, and RRNS…EEEE. Polar residues predominate over residues 656-674; the sequence is SVTSPTTLYDRYSSPTVST. 3 positions are modified to phosphoserine: serine 659, serine 669, and serine 684. Residues 806–818 show a composition bias toward low complexity; sequence ISPGGQQQNQGQP. The interval 825-1021 is domain B; it reads RPRKTSSLSL…QTFAMKYSQA (197 aa). Composition is skewed to polar residues over residues 935–950 and 958–969; these read SGSCENRSHQNSPTEL and DSSPVMRSNSTL. 5 positions are modified to phosphoserine: serine 942, serine 946, serine 960, serine 965, and serine 967. Residue threonine 968 is modified to Phosphothreonine. Over residues 971–981 the composition is skewed to pro residues; it reads VPQPSSAPPTP. Phosphoserine is present on residues serine 975 and serine 976. At threonine 980 the chain carries Phosphothreonine. A phosphoserine mark is found at serine 1031, serine 1064, serine 1076, and serine 1108.

It belongs to the retinoblastoma protein (RB) family. As to quaternary structure, interacts with AATF, KMT5B and KMT5C. Component of the DREAM complex (also named LINC complex) at least composed of E2F4, E2F5, LIN9, LIN37, LIN52, LIN54, MYBL1, MYBL2, RBL1, RBL2, RBBP4, TFDP1 and TFDP2. The complex exists in quiescent cells where it represses cell cycle-dependent genes. It dissociates in S phase when LIN9, LIN37, LIN52 and LIN54 form a subcomplex that binds to MYBL2. Interacts with USP4. Part of the peroxisome proliferator activated receptor alpha (PPAR-alpha) interacting complex (PRIC). Interacts with RINT1. Interacts with PML. Interacts with RBBP9. Interacts with CD53. During G0 and early G1 phase of the cell cycle, phosphorylated on Ser-636 and on 5 sites within the domain B. Phosphorylation on Ser-669 in G1 leads to its ubiquitin-dependent proteolysis.

It localises to the nucleus. Its function is as follows. Key regulator of entry into cell division. Directly involved in heterochromatin formation by maintaining overall chromatin structure and, in particular, that of constitutive heterochromatin by stabilizing histone methylation. Recruits and targets histone methyltransferases KMT5B and KMT5C, leading to epigenetic transcriptional repression. Controls histone H4 'Lys-20' trimethylation. Probably acts as a transcription repressor by recruiting chromatin-modifying enzymes to promoters. Potent inhibitor of E2F-mediated trans-activation, associates preferentially with E2F5. Binds to cyclins A and E. Binds to and may be involved in the transforming capacity of the adenovirus E1A protein. May act as a tumor suppressor. In Rattus norvegicus (Rat), this protein is Retinoblastoma-like protein 2 (Rbl2).